The chain runs to 234 residues: 1-(5-phosphoribosyl)-5-[(5-phosphoribosylamino)methylideneamino] imidazole-4-carboxamide isomerase (234 aa).

Asp9 functions as the Proton acceptor in the catalytic mechanism. Asp131 functions as the Proton donor in the catalytic mechanism.

It belongs to the HisA/HisF family.

The protein localises to the cytoplasm. It catalyses the reaction 1-(5-phospho-beta-D-ribosyl)-5-[(5-phospho-beta-D-ribosylamino)methylideneamino]imidazole-4-carboxamide = 5-[(5-phospho-1-deoxy-D-ribulos-1-ylimino)methylamino]-1-(5-phospho-beta-D-ribosyl)imidazole-4-carboxamide. It participates in amino-acid biosynthesis; L-histidine biosynthesis; L-histidine from 5-phospho-alpha-D-ribose 1-diphosphate: step 4/9. This is 1-(5-phosphoribosyl)-5-[(5-phosphoribosylamino)methylideneamino] imidazole-4-carboxamide isomerase from Staphylococcus aureus (strain NCTC 8325 / PS 47).